Reading from the N-terminus, the 232-residue chain is MDVLINKLASCNFSRTRNQVGKPCIINCVPGAGKSTLIRELLNSDSRFRAYTFGEADPKNLSGRRILPASELQNAPQGALIIIDEYTEGSWEPGKICAAFGDPIQSRGPGIVADFVCNKTKRFGSSTCELLNGFGFEIHSEKEDICLVRDFFEVEPEGTVIAFESEVKDILARHFVEFEDICSIRGKTFEEVTFFTASNSIPEHLRADFFQCLTRHKNKLTIACPDATFAPS.

The (+)RNA virus helicase ATP-binding domain occupies 1 to 117 (MDVLINKLAS…GPGIVADFVC (117 aa)). One can recognise a (+)RNA virus helicase C-terminal domain in the interval 118-232 (NKTKRFGSST…ACPDATFAPS (115 aa)).

It belongs to the Tymovirales TGBp1 protein family. As to quaternary structure, homodimer and homooligomer. Interacts with capsid protein. Interacts with host AGO1; this interaction targets the host protein for degradation, thereby suppressing the antiviral RNA silencing.

Its subcellular location is the host cytoplasm. Its function is as follows. Transports viral genome to neighboring plant cells directly through plasmosdesmata, without any budding. The movement protein allows efficient cell to cell propagation, by bypassing the host cell wall barrier. Increases plasmodesma size exclusion limit. Acts as a suppressor of RNA-mediated gene silencing, also known as post-transcriptional gene silencing (PTGS), a mechanism of plant viral defense that limits the accumulation of viral RNAs. The sequence is that of Movement and silencing protein TGBp1 from Populus balsamifera (Balsam poplar).